A 506-amino-acid chain; its full sequence is Cytochrome P450 71B8 (506 aa).

A helical membrane pass occupies residues 5-25; that stretch reads ILLCFFFLFPLLLTLFKKLLP. C443 lines the heme pocket.

Belongs to the cytochrome P450 family. Heme serves as cofactor.

The protein localises to the membrane. This is Cytochrome P450 71B8 (CYP71B8) from Arabidopsis thaliana (Mouse-ear cress).